The following is a 256-amino-acid chain: Cell division protein DivIB (256 aa).

The Cytoplasmic portion of the chain corresponds to 1-23; sequence MSKDLISTDEYIKIKKKRKRIKK. The helical transmembrane segment at 24–44 threads the bilayer; that stretch reads IVVLFIFLISILVTLCLKIPY. One can recognise a POTRA domain in the interval 45-113; the sequence is FNIESIEIKG…NKLQIYVKER (69 aa). The Extracellular segment spans residues 45 to 256; that stretch reads FNIESIEIKG…EGNPVFYIEK (212 aa).

It belongs to the FtsQ/DivIB family. DivIB subfamily.

It localises to the cell membrane. Cell division protein that may be involved in stabilizing or promoting the assembly of the division complex. The polypeptide is Cell division protein DivIB (Clostridium botulinum (strain Hall / ATCC 3502 / NCTC 13319 / Type A)).